Consider the following 349-residue polypeptide: Ion-translocating oxidoreductase complex subunit D (349 aa).

A run of 4 helical transmembrane segments spans residues 20-40 (IMFLVVLSCIPGLCTEIYFFG), 42-62 (GVLIQTLLFVIISLLFEIIIL), 83-105 (VLLGLSTPCALPWWMIIFSCFFA), and 120-140 (IFNPAMIGYVVLLISFPVHMT). Thr184 carries the FMN phosphoryl threonine modification. The next 5 membrane-spanning stretches (helical) occupy residues 212-232 (IVSIAWKYINISFLIGGCFLL), 236-256 (VICWRIPLSFLSSLIFFSSIT), 263-283 (FFCSPLFHLFSGGTMMCAFFI), 291-311 (SCTKIGKIFFGLIIGFLVWII), and 319-339 (DGIAFSVLFANMIVPLMDAYL).

The protein belongs to the NqrB/RnfD family. As to quaternary structure, the complex is composed of six subunits: RnfA, RnfB, RnfC, RnfD, RnfE and RnfG. Requires FMN as cofactor.

The protein localises to the cell inner membrane. Part of a membrane-bound complex that couples electron transfer with translocation of ions across the membrane. The chain is Ion-translocating oxidoreductase complex subunit D from Buchnera aphidicola subsp. Schizaphis graminum (strain Sg).